A 240-amino-acid polypeptide reads, in one-letter code: Ribonuclease HII (240 aa).

The region spanning 31-222 (RLIAGVDEAG…VRRALGLETA (192 aa)) is the RNase H type-2 domain. A divalent metal cation contacts are provided by aspartate 37, glutamate 38, and aspartate 130.

The protein belongs to the RNase HII family. It depends on Mn(2+) as a cofactor. Mg(2+) is required as a cofactor.

The protein localises to the cytoplasm. It carries out the reaction Endonucleolytic cleavage to 5'-phosphomonoester.. In terms of biological role, endonuclease that specifically degrades the RNA of RNA-DNA hybrids. The polypeptide is Ribonuclease HII (Xanthomonas campestris pv. campestris (strain 8004)).